Consider the following 237-residue polypeptide: MIPTPVLRFNPIADKVPKWKRIYHKWRGIQNMPFKSKYFVGYDLDGNSYWEFKNVNNPGRYRRIVEPAKPDLSLVDHKIPPQWVQWLRFTRPHHPTLEELIADKQRQELLQAKIAAYEAKWKEIPLKTAENADESRDMSLEDQLKPTFTEAELAEMAQVFEKVPQQAAPAPPRVPNMAAIEVEDIIKHYPENGPDTVLADGGRQRDHDLKMDYVEKERDDSGKPAEWTPKAAVRRRG.

The span at 214 to 223 (VEKERDDSGK) shows a compositional bias: basic and acidic residues. The tract at residues 214–237 (VEKERDDSGKPAEWTPKAAVRRRG) is disordered.

Belongs to the complex I NDUFA12 subunit family.

The protein localises to the mitochondrion. Acts as an assembly factor of mitochondrial complex I. The polypeptide is NADH-ubiquinone oxidoreductase assembly factor N7BML (Yarrowia lipolytica (strain CLIB 122 / E 150) (Yeast)).